We begin with the raw amino-acid sequence, 332 residues long: Lipoyl synthase (332 aa).

[4Fe-4S] cluster contacts are provided by C74, C79, C85, C100, C104, C107, and S314. The 219-residue stretch at 85 to 303 (CFGKGTATFM…EQEAYRMGFS (219 aa)) folds into the Radical SAM core domain.

The protein belongs to the radical SAM superfamily. Lipoyl synthase family. Requires [4Fe-4S] cluster as cofactor.

The protein localises to the cytoplasm. It carries out the reaction [[Fe-S] cluster scaffold protein carrying a second [4Fe-4S](2+) cluster] + N(6)-octanoyl-L-lysyl-[protein] + 2 oxidized [2Fe-2S]-[ferredoxin] + 2 S-adenosyl-L-methionine + 4 H(+) = [[Fe-S] cluster scaffold protein] + N(6)-[(R)-dihydrolipoyl]-L-lysyl-[protein] + 4 Fe(3+) + 2 hydrogen sulfide + 2 5'-deoxyadenosine + 2 L-methionine + 2 reduced [2Fe-2S]-[ferredoxin]. It participates in protein modification; protein lipoylation via endogenous pathway; protein N(6)-(lipoyl)lysine from octanoyl-[acyl-carrier-protein]: step 2/2. Catalyzes the radical-mediated insertion of two sulfur atoms into the C-6 and C-8 positions of the octanoyl moiety bound to the lipoyl domains of lipoate-dependent enzymes, thereby converting the octanoylated domains into lipoylated derivatives. In Verminephrobacter eiseniae (strain EF01-2), this protein is Lipoyl synthase.